The following is a 227-amino-acid chain: Cytidylate kinase (227 aa).

Residue Gly-12 to Thr-20 coordinates ATP.

Belongs to the cytidylate kinase family. Type 1 subfamily.

The protein resides in the cytoplasm. The enzyme catalyses CMP + ATP = CDP + ADP. The catalysed reaction is dCMP + ATP = dCDP + ADP. The polypeptide is Cytidylate kinase (Erwinia tasmaniensis (strain DSM 17950 / CFBP 7177 / CIP 109463 / NCPPB 4357 / Et1/99)).